We begin with the raw amino-acid sequence, 547 residues long: Phosphomethylpyrimidine synthase (547 aa).

Substrate contacts are provided by residues Asn-150, Met-179, Tyr-208, His-244, 264-266 (SRG), 305-308 (DGLR), and Glu-344. A Zn(2+)-binding site is contributed by His-348. Tyr-371 provides a ligand contact to substrate. His-412 contacts Zn(2+). [4Fe-4S] cluster is bound by residues Cys-492, Cys-495, and Cys-500.

The protein belongs to the ThiC family. The cofactor is [4Fe-4S] cluster.

The enzyme catalyses 5-amino-1-(5-phospho-beta-D-ribosyl)imidazole + S-adenosyl-L-methionine = 4-amino-2-methyl-5-(phosphooxymethyl)pyrimidine + CO + 5'-deoxyadenosine + formate + L-methionine + 3 H(+). It functions in the pathway cofactor biosynthesis; thiamine diphosphate biosynthesis. Its function is as follows. Catalyzes the synthesis of the hydroxymethylpyrimidine phosphate (HMP-P) moiety of thiamine from aminoimidazole ribotide (AIR) in a radical S-adenosyl-L-methionine (SAM)-dependent reaction. The sequence is that of Phosphomethylpyrimidine synthase from Nocardia farcinica (strain IFM 10152).